Reading from the N-terminus, the 97-residue chain is Cell division protein FtsL (97 aa).

Residues 1–11 lie on the Cytoplasmic side of the membrane; it reads MSRLFVKRLPT. The chain crosses the membrane as a helical span at residues 12–32; the sequence is GSFLMLLLYIGLLLSAIAVAY. Topologically, residues 33–97 are periplasmic; sequence STYWNRQLLN…DPAEVRMVAP (65 aa).

The protein belongs to the FtsL family. Part of a complex composed of FtsB, FtsL and FtsQ.

The protein resides in the cell inner membrane. Functionally, essential cell division protein. May link together the upstream cell division proteins, which are predominantly cytoplasmic, with the downstream cell division proteins, which are predominantly periplasmic. This Pseudomonas aeruginosa (strain ATCC 15692 / DSM 22644 / CIP 104116 / JCM 14847 / LMG 12228 / 1C / PRS 101 / PAO1) protein is Cell division protein FtsL.